We begin with the raw amino-acid sequence, 634 residues long: Chaperone protein HtpG (634 aa).

Positions 1–339 (MAQETMSFQA…SADLPLNVSR (339 aa)) are a; substrate-binding. A b region spans residues 340 to 559 (EILQESRDVK…DGEMSGYLQR (220 aa)). The interval 560 to 634 (MLKAAGQQAP…ALLLARANEA (75 aa)) is c.

Belongs to the heat shock protein 90 family. In terms of assembly, homodimer.

It is found in the cytoplasm. Molecular chaperone. Has ATPase activity. The chain is Chaperone protein HtpG from Paraburkholderia xenovorans (strain LB400).